A 578-amino-acid polypeptide reads, in one-letter code: Solute carrier family 15 member 3 (578 aa).

Residues methionine 1–glutamate 15 show a composition bias toward basic and acidic residues. A disordered region spans residues methionine 1–proline 27. Transmembrane regions (helical) follow at residues threonine 33–threonine 53, leucine 77–tyrosine 97, leucine 102–isoleucine 122, proline 155–valine 175, and tryptophan 201–glutamate 221. An N-linked (GlcNAc...) asparagine glycan is attached at asparagine 223. The chain crosses the membrane as a helical span at residues isoleucine 232 to isoleucine 252. A disordered region spans residues serine 280 to proline 301. The helical transmembrane segment at phenylalanine 308–tyrosine 328 threads the bilayer. An N-linked (GlcNAc...) asparagine glycan is attached at asparagine 353. The next 2 helical transmembrane spans lie at isoleucine 367 to lysine 387 and leucine 405 to leucine 425. Asparagine 436 is a glycosylation site (N-linked (GlcNAc...) asparagine). 3 consecutive transmembrane segments (helical) span residues tyrosine 462–tyrosine 481, glycine 494–leucine 514, and tyrosine 538–glycine 558.

It belongs to the major facilitator superfamily. Proton-dependent oligopeptide transporter (POT/PTR) (TC 2.A.17) family. In terms of tissue distribution, expressed highly in bone marrow derived macrophages, and weakly in spleen and lung. Expressed in plasmacytoid dendritic cells (pDCs) in response to toll-like receptors (TLR) stimulation.

Its subcellular location is the lysosome membrane. The protein resides in the endosome membrane. The enzyme catalyses N-acetyl-D-muramoyl-L-alanyl-D-isoglutamine(out) + n H(+)(out) = N-acetyl-D-muramoyl-L-alanyl-D-isoglutamine(in) + n H(+)(in). The catalysed reaction is glycylglycylglycine(out) + n H(+)(out) = glycylglycylglycine(in) + n H(+)(in). It catalyses the reaction carnosine(out) + n H(+)(out) = carnosine(in) + n H(+)(in). It carries out the reaction L-histidine(out) + n H(+)(out) = L-histidine(in) + n H(+)(in). Proton-coupled amino-acid transporter that transports free histidine and certain di- and tripeptides, and is involved in innate immune response. Also able to transport carnosine. Involved in the detection of microbial pathogens by toll-like receptors (TLRs) and NOD-like receptors (NLRs), probably by mediating transport of bacterial peptidoglycans across the endolysosomal membrane: catalyzes the transport of certain bacterial peptidoglycans, such as muramyl dipeptide (MDP), the NOD2 ligand. The protein is Solute carrier family 15 member 3 of Mus musculus (Mouse).